A 579-amino-acid polypeptide reads, in one-letter code: Thiol:disulfide interchange protein DsbD (579 aa).

A signal peptide spans 1–16 (MKKLFLFFTLIFTAFA). Cystine bridges form between cysteine 124–cysteine 129 and cysteine 193–cysteine 315. The next 8 membrane-spanning stretches (helical) occupy residues 178–198 (IFGFFLLGLGLAFTPCVLPML), 230–250 (LTYTLLGLAVAAIGLPFQIAL), 254–274 (YVMIGLSILFVVLALSMFGLF), 296–316 (GAFGGAFAMGMIAGLVASPCT), 337–357 (AATLYLLALGMGVPLMLITLF), 376–396 (FGFVMLALPVFLLSRILPEVW), 397–417 (EPRLWAGLATVFFIWFALQMS), and 420–440 (GFGYAIKIISFVLAMVTVQPL). The region spanning 449–579 (TTTQSAVENK…AFSNWLKALH (131 aa)) is the Thioredoxin domain. Cysteine 495 and cysteine 498 form a disulfide bridge.

Belongs to the thioredoxin family. DsbD subfamily.

It is found in the cell inner membrane. It catalyses the reaction [protein]-dithiol + NAD(+) = [protein]-disulfide + NADH + H(+). It carries out the reaction [protein]-dithiol + NADP(+) = [protein]-disulfide + NADPH + H(+). Functionally, required to facilitate the formation of correct disulfide bonds in some periplasmic proteins and for the assembly of the periplasmic c-type cytochromes. Acts by transferring electrons from cytoplasmic thioredoxin to the periplasm. This transfer involves a cascade of disulfide bond formation and reduction steps. The protein is Thiol:disulfide interchange protein DsbD of Haemophilus influenzae (strain PittEE).